Reading from the N-terminus, the 427-residue chain is Proline--tRNA ligase (427 aa).

Belongs to the class-II aminoacyl-tRNA synthetase family. ProS type 2 subfamily. As to quaternary structure, homodimer.

It localises to the cytoplasm. It catalyses the reaction tRNA(Pro) + L-proline + ATP = L-prolyl-tRNA(Pro) + AMP + diphosphate. Functionally, catalyzes the attachment of proline to tRNA(Pro) in a two-step reaction: proline is first activated by ATP to form Pro-AMP and then transferred to the acceptor end of tRNA(Pro). This Rickettsia akari (strain Hartford) protein is Proline--tRNA ligase.